The primary structure comprises 320 residues: Uridine phosphorylase 2 (320 aa).

Phosphate is bound by residues glycine 66, arginine 100, and 144–147 (RIGT). A disulfide bridge links cysteine 95 with cysteine 102. Uridine-binding positions include 148-149 (SG) and 223-225 (QGR).

The protein belongs to the PNP/UDP phosphorylase family. In terms of assembly, homodimer. In terms of tissue distribution, liver specific.

It carries out the reaction uridine + phosphate = alpha-D-ribose 1-phosphate + uracil. It catalyses the reaction 2'-deoxyuridine + phosphate = 2-deoxy-alpha-D-ribose 1-phosphate + uracil. The protein operates within pyrimidine metabolism; UMP biosynthesis via salvage pathway; uracil from uridine (phosphorylase route): step 1/1. Its activity is regulated as follows. A conditional disulfide bridge can form within the protein that dislocates a critical phosphate-coordinating arginine Arg-100 away from the active site, disabling the enzyme. In terms of biological role, catalyzes the reversible phosphorylytic cleavage of uridine to uracil and ribose-1-phosphate which can then be utilized as carbon and energy sources or in the rescue of pyrimidine bases for nucleotide synthesis. Shows broad substrate specificity and can also accept deoxyuridine and other analogous compounds. The sequence is that of Uridine phosphorylase 2 from Mus musculus (Mouse).